Consider the following 178-residue polypeptide: ATP synthase subunit delta (178 aa).

It belongs to the ATPase delta chain family. In terms of assembly, F-type ATPases have 2 components, F(1) - the catalytic core - and F(0) - the membrane proton channel. F(1) has five subunits: alpha(3), beta(3), gamma(1), delta(1), epsilon(1). F(0) has three main subunits: a(1), b(2) and c(10-14). The alpha and beta chains form an alternating ring which encloses part of the gamma chain. F(1) is attached to F(0) by a central stalk formed by the gamma and epsilon chains, while a peripheral stalk is formed by the delta and b chains.

The protein resides in the cell membrane. F(1)F(0) ATP synthase produces ATP from ADP in the presence of a proton or sodium gradient. F-type ATPases consist of two structural domains, F(1) containing the extramembraneous catalytic core and F(0) containing the membrane proton channel, linked together by a central stalk and a peripheral stalk. During catalysis, ATP synthesis in the catalytic domain of F(1) is coupled via a rotary mechanism of the central stalk subunits to proton translocation. In terms of biological role, this protein is part of the stalk that links CF(0) to CF(1). It either transmits conformational changes from CF(0) to CF(1) or is implicated in proton conduction. In Geobacillus stearothermophilus (Bacillus stearothermophilus), this protein is ATP synthase subunit delta.